We begin with the raw amino-acid sequence, 353 residues long: Protein RecA (353 aa).

Residue 67-74 (GPESSGKT) participates in ATP binding.

This sequence belongs to the RecA family.

The protein resides in the cytoplasm. Functionally, can catalyze the hydrolysis of ATP in the presence of single-stranded DNA, the ATP-dependent uptake of single-stranded DNA by duplex DNA, and the ATP-dependent hybridization of homologous single-stranded DNAs. It interacts with LexA causing its activation and leading to its autocatalytic cleavage. In Salmonella paratyphi A (strain ATCC 9150 / SARB42), this protein is Protein RecA.